The primary structure comprises 343 residues: Adenine deaminase (343 aa).

3 residues coordinate Zn(2+): His-17, His-19, and His-197. Catalysis depends on Glu-200, which acts as the Proton donor. Residue Asp-278 participates in Zn(2+) binding. Substrate is bound at residue Asp-279.

It belongs to the metallo-dependent hydrolases superfamily. Adenosine and AMP deaminases family. Adenine deaminase type 2 subfamily. Zn(2+) serves as cofactor.

It catalyses the reaction adenine + H2O + H(+) = hypoxanthine + NH4(+). Catalyzes the hydrolytic deamination of adenine to hypoxanthine. Plays an important role in the purine salvage pathway and in nitrogen catabolism. The sequence is that of Adenine deaminase from Rhodopseudomonas palustris (strain BisB18).